We begin with the raw amino-acid sequence, 69 residues long: DNA-directed RNA polymerase subunit omega (69 aa).

Belongs to the RNA polymerase subunit omega family. In terms of assembly, the RNAP catalytic core consists of 2 alpha, 1 beta, 1 beta' and 1 omega subunit. When a sigma factor is associated with the core the holoenzyme is formed, which can initiate transcription.

It catalyses the reaction RNA(n) + a ribonucleoside 5'-triphosphate = RNA(n+1) + diphosphate. Functionally, promotes RNA polymerase assembly. Latches the N- and C-terminal regions of the beta' subunit thereby facilitating its interaction with the beta and alpha subunits. This chain is DNA-directed RNA polymerase subunit omega, found in Carboxydothermus hydrogenoformans (strain ATCC BAA-161 / DSM 6008 / Z-2901).